The sequence spans 429 residues: UDP-N-acetylglucosamine 1-carboxyvinyltransferase (429 aa).

Lys-22–Asn-23 contacts phosphoenolpyruvate. Arg-102 is a binding site for UDP-N-acetyl-alpha-D-glucosamine. Cys-126 acts as the Proton donor in catalysis. 2-(S-cysteinyl)pyruvic acid O-phosphothioketal is present on Cys-126. UDP-N-acetyl-alpha-D-glucosamine is bound by residues Arg-131–Leu-135, Asp-316, and Ile-338.

Belongs to the EPSP synthase family. MurA subfamily.

It is found in the cytoplasm. It carries out the reaction phosphoenolpyruvate + UDP-N-acetyl-alpha-D-glucosamine = UDP-N-acetyl-3-O-(1-carboxyvinyl)-alpha-D-glucosamine + phosphate. It participates in cell wall biogenesis; peptidoglycan biosynthesis. Its function is as follows. Cell wall formation. Adds enolpyruvyl to UDP-N-acetylglucosamine. This is UDP-N-acetylglucosamine 1-carboxyvinyltransferase from Afipia carboxidovorans (strain ATCC 49405 / DSM 1227 / KCTC 32145 / OM5) (Oligotropha carboxidovorans).